A 204-amino-acid chain; its full sequence is Superoxide dismutase [Mn] (204 aa).

4 residues coordinate Mn(2+): His29, His84, Asp167, and His171.

The protein belongs to the iron/manganese superoxide dismutase family. In terms of assembly, homotetramer. Mn(2+) is required as a cofactor.

The enzyme catalyses 2 superoxide + 2 H(+) = H2O2 + O2. In terms of biological role, destroys superoxide anion radicals which are normally produced within the cells and which are toxic to biological systems. This Thermus aquaticus protein is Superoxide dismutase [Mn] (sodA).